The sequence spans 256 residues: GCN5-related N-acetyltransferase 10, chloroplastic (256 aa).

Residues 1-41 (MGHLPQSLYSAAGPKFPYPGSSGLGVDQRKLTWSRFPVFLR) constitute a chloroplast transit peptide. One can recognise an N-acetyltransferase domain in the interval 106-256 (FMFFQAEVLS…RRVLMSKRFS (151 aa)). Acetyl-CoA is bound by residues 178 to 180 (LAV), 186 to 191 (RKKMAS), 217 to 219 (DAA), and Tyr224. Residue Tyr224 is the Proton donor of the active site.

Belongs to the acetyltransferase family. GNAT subfamily. Oligomer. Post-translationally, autoacetylated. Expressed in green tissues.

It is found in the plastid. The protein localises to the chloroplast. The catalysed reaction is an N-terminal L-alpha-aminoacyl-[protein] + acetyl-CoA = N-terminal N(alpha)-acetyl-L-alpha-aminoacyl-[protein] + CoA + H(+). It catalyses the reaction L-lysyl-[protein] + acetyl-CoA = N(6)-acetyl-L-lysyl-[protein] + CoA + H(+). The enzyme catalyses N-terminal L-methionyl-[protein] + acetyl-CoA = N-terminal N(alpha)-acetyl-L-methionyl-[protein] + CoA + H(+). It carries out the reaction N-terminal L-seryl-[protein] + acetyl-CoA = N-terminal N(alpha)-acetyl-L-seryl-[protein] + CoA + H(+). The catalysed reaction is N-terminal L-valyl-[protein] + acetyl-CoA = N-terminal N(alpha)-acetyl-L-valyl-[protein] + CoA + H(+). It catalyses the reaction N-terminal L-threonyl-[protein] + acetyl-CoA = N-terminal N(alpha)-acetyl-L-threonyl-[protein] + CoA + H(+). The enzyme catalyses N-terminal L-alanyl-[protein] + acetyl-CoA = N-terminal N(alpha)-acetyl-L-alanyl-[protein] + CoA + H(+). It carries out the reaction N-terminal glycyl-[protein] + acetyl-CoA = N-terminal N(alpha)-acetylglycyl-[protein] + CoA + H(+). In terms of biological role, protein acetyltransferase with dual specificity triggering both N-alpha-acetylation (NTA), with a preference for leucine, methionine, serine, valine and to a lower extent threonine and alanine as substrates (can also use glycine), and epsilon-lysine acetylation (KA) of several plastid proteins. This is GCN5-related N-acetyltransferase 10, chloroplastic from Arabidopsis thaliana (Mouse-ear cress).